We begin with the raw amino-acid sequence, 203 residues long: Large ribosomal subunit protein uL13 (203 aa).

Ala2 carries the N-acetylalanine modification. A Citrulline modification is found at Arg59. Ser77 is subject to Phosphoserine. Arg140 bears the Citrulline mark. At Lys191 the chain carries N6-acetyllysine.

The protein belongs to the universal ribosomal protein uL13 family. Component of the 60S ribosome. Component of the GAIT complex. Interacts with EIF4G1. Phosphorylation at Ser-77 upon interferon-gamma treatment in monocytes involves a DAPK1-DAPK3 kinase cascade and is causing release from the ribosome, association with the GAIT complex and subsequent involvement in transcript-selective translation inhibition. In terms of processing, citrullinated by PADI4.

It is found in the cytoplasm. Functionally, associated with ribosomes but is not required for canonical ribosome function and has extra-ribosomal functions. Component of the GAIT (gamma interferon-activated inhibitor of translation) complex which mediates interferon-gamma-induced transcript-selective translation inhibition in inflammation processes. Upon interferon-gamma activation and subsequent phosphorylation dissociates from the ribosome and assembles into the GAIT complex which binds to stem loop-containing GAIT elements in the 3'-UTR of diverse inflammatory mRNAs (such as ceruplasmin) and suppresses their translation. In the GAIT complex interacts with m7G cap-bound eIF4G at or near the eIF3-binding site and blocks the recruitment of the 43S ribosomal complex. Involved in methylation of rRNA. This is Large ribosomal subunit protein uL13 (RPL13A) from Oryctolagus cuniculus (Rabbit).